Consider the following 159-residue polypeptide: MDDAEILVDVQVVPQYAAVVDATLVERAVAQTLRTDDVAGPVEISILITDDADVHRLNQTYRGVDAPTDVLSFAEDDDHSFVRPPDAPRYLGDIAISWDRVVAQAAEYGHSRERELAFLVVHGVLHLLGYDHERGPVDEADMRAREEAILGALGLSREG.

Residues His-122, His-126, and His-132 each contribute to the Zn(2+) site.

This sequence belongs to the endoribonuclease YbeY family. It depends on Zn(2+) as a cofactor.

Its subcellular location is the cytoplasm. Single strand-specific metallo-endoribonuclease involved in late-stage 70S ribosome quality control and in maturation of the 3' terminus of the 16S rRNA. This is Endoribonuclease YbeY from Roseiflexus castenholzii (strain DSM 13941 / HLO8).